Consider the following 1383-residue polypeptide: MDEGVNLVFHKKVIDGTAIKRLISRLIDHFGMAHTSHILDQVKTLGFQQATATSISLGIDDLLTIPSKGWLVQDAEQQSLSLEKHHHYGNVHAVEKLRQSIEVWYATSEYLRQEMNPNFRMTDPFNPVHIMSFSGARGNASQVHQLVGMRGLMSDPQGQMIDLPIQSNLREGLSLTEYIISCYGARKGVVDTAVRTSDAGYLTRRLVEVVQHIVVRRTDCGTLRGISVSPRRMPERIFIQTLIGRVLADDIYIGSRCIAIRNQDIGIGLVNRFITFRIQPISIRTPFTCRSTSWICRLCYGRSPTHGDLVELGEAVGIIAGQSIGEPGTQLTLRTFHTGGVFTGGTAEHVRAPSNGKIKFNFNEALVHPARTRHGHPALLCSMDLDVTIESEDILHNLTIPPKSFLLVQNNQYVESEQVIAEICAGTSTFHFKERVRKHIYSDSEGEMHWSTDVYHAPEFTYSNVHLLPKTSHLWILSGGSCRSRGAPFSLHKDQDQMNPRSTERERRYLSSLSANNDQIRYKFFSSSFSGKKKDDRSPGYSEMNRIICTLPCNLIYPSILRENSDLLAKRRRNRLVIPVQSSQEREKELIPHSGISIELPINGIFRKKSILAFFDDPRYRTKSSGITQYETMGMHSIVKKEGLVDYRGINEFKPKYQMTIDRFFFIPEEVHILPESSSIMVRNNSLIGVDTRIALNTRSRAGGLVRVERKKRGIALQIFSGTIHFPGETDKISWDSGILIPPGTGKRNSKESKKWKNGIYVQRITPTKKKHFVLFRPVVTYEIADGLNLARLFPPDLCQEKDNMQLQIVNYIVYGNGKPIREISDTSIQLVRTWFILNWDQDKKSASAEAAHASFVEVRAKGLIRDFLRIDLVKSPILDPRKRNDPSGSGLISDNVSDHTNINPFYSKPKMKQSPRQNHGTIRTLLNQNKECPSLMILSASNCFRMGPFNDVKSQNVIKESIKKDAIIQIRNSIGPLGTALQVVNFDSFYYFITHNQVLLTKYLQVENLKQTFQVLQYYLMDESGRIYNPDPRSNIVLNSFNLSWYFLPHNNYENSCEEISTIVSLGQFICENGCIAKNGPYLRSGQVLIVQLDSVVIRSAKPYLATPGATVHGHYGEILYDGDTVVTFLYEKSRSGDITQGLPKVEQVLEVRSVDSISVNLEKRVENWNEHITRILGFPWGFLIGAELTIVQSRISLVNKIQKVYRSQGVQIHNRHIEIIVRQITSKVLVSEDGMSNVFLPRELIGLLRAERTGRALEESICYKAFLLGITRTSLNTQSFISEASFQETARVLAKAALRGRIDWLKGLKENVVIGGMIPVGTGFKGLVHCSKQHKSIPKNKHFFEGEIRDILFHHRELFDSCISKNFHDTPEQSFRVFNDS.

Cys-220, Cys-289, Cys-296, and Cys-299 together coordinate Zn(2+).

It belongs to the RNA polymerase beta' chain family. RpoC2 subfamily. In terms of assembly, in plastids the minimal PEP RNA polymerase catalytic core is composed of four subunits: alpha, beta, beta', and beta''. When a (nuclear-encoded) sigma factor is associated with the core the holoenzyme is formed, which can initiate transcription. Zn(2+) is required as a cofactor.

Its subcellular location is the plastid. The protein resides in the chloroplast. It catalyses the reaction RNA(n) + a ribonucleoside 5'-triphosphate = RNA(n+1) + diphosphate. In terms of biological role, DNA-dependent RNA polymerase catalyzes the transcription of DNA into RNA using the four ribonucleoside triphosphates as substrates. This Oenothera parviflora (Small-flowered evening primrose) protein is DNA-directed RNA polymerase subunit beta''.